The sequence spans 314 residues: MFDGIMPLIGSLLLVICVMVGVAFLTLLERKVLGYIQIRKGPNKVGFNGLLQPFSDAVKLFTKEQTYPLLSNYISYYFSPVFSLFLSLLIWMCIPYLIKLYSFNLGVLFFLCCTSLGVYTVMIAGWSSNSNYALLGGLRAVAQTISYEVSLALILLSFIFLVGNYNFLSFYFYQDYVWFIFFCFPLGLVWLASCLAETNRTPFDFAEGESELVSGFNVEYSSGGFALIFLAEYSSILFMSMLFVVIFLGSDIYSFMFFLKLSFISFIFIWVRGTLPRFRYDKLMYLAWKSFLPLSLNYLFFFVGLKIFFISLLF.

Transmembrane regions (helical) follow at residues Ile5–Leu25, Phe78–Ile98, Leu105–Gly125, Ala152–Phe172, Tyr176–Ala196, Leu227–Phe247, Asp251–Val271, and Leu294–Phe314.

This sequence belongs to the complex I subunit 1 family.

It is found in the mitochondrion inner membrane. It carries out the reaction a ubiquinone + NADH + 5 H(+)(in) = a ubiquinol + NAD(+) + 4 H(+)(out). Functionally, core subunit of the mitochondrial membrane respiratory chain NADH dehydrogenase (Complex I) that is believed to belong to the minimal assembly required for catalysis. Complex I functions in the transfer of electrons from NADH to the respiratory chain. The immediate electron acceptor for the enzyme is believed to be ubiquinone. The protein is NADH-ubiquinone oxidoreductase chain 1 (mt:ND1) of Anopheles gambiae (African malaria mosquito).